The sequence spans 1594 residues: Mucin-like protein (1594 aa).

The Extracellular segment spans residues 1-1530; the sequence is DTTAGPDTTS…YETREDGLEM (1530 aa). 3 consecutive TSP type-1 domains span residues 141-196, 198-253, and 255-310; these read DGGF…GSCP, DGNF…PPCP, and DGNF…GPCP. 9 disulfide bridges follow: Cys-153-Cys-190, Cys-157-Cys-195, Cys-168-Cys-180, Cys-210-Cys-247, Cys-214-Cys-252, Cys-225-Cys-237, Cys-267-Cys-304, Cys-271-Cys-309, and Cys-282-Cys-294. One can recognise an NIDO domain in the interval 400 to 566; the sequence is LTISDDAFEQ…GVWFFRLEMN (167 aa). Residues 568-706 enclose the AMOP domain; that stretch reads ILSLAGKKCN…RSCFGYTLRR (139 aa). One can recognise a VWFD domain in the interval 706–901; the sequence is RRGLIFGDPH…KWQINASQSL (196 aa). EGF-like domains are found at residues 1063-1108 and 1110-1156; these read LILL…QYCQ and KIDA…SICE. 14 cysteine pairs are disulfide-bonded: Cys-1067/Cys-1075, Cys-1069/Cys-1096, Cys-1098/Cys-1107, Cys-1114/Cys-1127, Cys-1121/Cys-1141, Cys-1144/Cys-1155, Cys-1161/Cys-1173, Cys-1169/Cys-1182, Cys-1285/Cys-1296, Cys-1292/Cys-1305, Cys-1307/Cys-1320, Cys-1326/Cys-1341, Cys-1334/Cys-1350, and Cys-1352/Cys-1363. The 35-residue stretch at 1157–1191 folds into the EGF-like 3; calcium-binding domain; it reads DIDECSDANVSKCDHSCINLPGSYVCDCNQGFSLE. The 41-residue stretch at 1281–1321 folds into the EGF-like 4; calcium-binding domain; sequence DINECTTHRHKCSQICHNLDGSYTCSCQPGFNLSPDQTTCE. The EGF-like 5; calcium-binding domain maps to 1322–1364; the sequence is DIDECGLINEAHCEGSLEICINTMGSFRCECQDGFHRVNDTCQ. A helical transmembrane segment spans residues 1531–1551; sequence IWLLVGVSVAVAVPLMIVIVI. Residues 1552 to 1593 are Cytoplasmic-facing; sequence LYREYRRIAKQRRKTNNFDLRQWSGARERTIYSGFTNSKSAR.

As to expression, component of the acid-insoluble and acid-soluble organic matrix of the aragonitic skeleton (at protein level).

It is found in the membrane. This is Mucin-like protein from Acropora millepora (Staghorn coral).